A 209-amino-acid polypeptide reads, in one-letter code: Large ribosomal subunit protein uL3 (209 aa).

Residues 130-162 (RGPMTHGSKFKRAPGSMGASSDPSRTFKNKRMP) are disordered.

Belongs to the universal ribosomal protein uL3 family. In terms of assembly, part of the 50S ribosomal subunit. Forms a cluster with proteins L14 and L19.

In terms of biological role, one of the primary rRNA binding proteins, it binds directly near the 3'-end of the 23S rRNA, where it nucleates assembly of the 50S subunit. In Clostridium botulinum (strain Alaska E43 / Type E3), this protein is Large ribosomal subunit protein uL3.